The following is a 257-amino-acid chain: Flavin-dependent thymidylate synthase (257 aa).

The ThyX domain maps to 1 to 202; it reads MNVKLVSYTR…PRLFRYVGPN (202 aa). Residues Ser55, 79–81, and Gln87 each bind FAD; that span reads RHR. DUMP-binding positions include 76 to 79, 87 to 91, and Arg141; these read QLVR and QMSHR. The ThyX motif signature appears at 79–89; the sequence is RHRVASYTQMS. Residues 157-159 and Asn163 each bind FAD; that span reads NAR. Residue Arg168 coordinates dUMP. Arg168 serves as the catalytic Involved in ionization of N3 of dUMP, leading to its activation.

Belongs to the thymidylate synthase ThyX family. Homotetramer. FAD serves as cofactor.

The enzyme catalyses dUMP + (6R)-5,10-methylene-5,6,7,8-tetrahydrofolate + NADPH + H(+) = dTMP + (6S)-5,6,7,8-tetrahydrofolate + NADP(+). It functions in the pathway pyrimidine metabolism; dTTP biosynthesis. In terms of biological role, catalyzes the reductive methylation of 2'-deoxyuridine-5'-monophosphate (dUMP) to 2'-deoxythymidine-5'-monophosphate (dTMP) while utilizing 5,10-methylenetetrahydrofolate (mTHF) as the methyl donor, and NADPH and FADH(2) as the reductant. This Sulfurisphaera tokodaii (strain DSM 16993 / JCM 10545 / NBRC 100140 / 7) (Sulfolobus tokodaii) protein is Flavin-dependent thymidylate synthase.